Consider the following 236-residue polypeptide: Lectin CPL (236 aa).

2 residues coordinate Mn(2+): glutamate 8 and aspartate 10. Ca(2+)-binding residues include aspartate 10, tyrosine 12, asparagine 14, and aspartate 19. Residue asparagine 14 participates in a carbohydrate binding. 2 residues coordinate Mn(2+): aspartate 19 and histidine 24. Residues 99 to 100, aspartate 207, and arginine 227 contribute to the a carbohydrate site; that span reads VY.

It belongs to the leguminous lectin family. Homotetramer; dimer of dimers. Concanavalin A-like lectins of the Diocleinae subtribe undergo proteolytic processing referred to as circular permutation. The propeptide is split into an N-terminal and a C-terminal part, the gamma and beta chain, respectively. These are then religated in beta-gamma order to form the mature alpha chain. The beta and gamma chains can often be detected in cell extracts. Residues 1-118 of the mature chain, as displayed here, probably constitute the beta chain in the propeptide, residues 119-236 the gamma chain.

Functionally, D-mannose/D-glucose-binding lectin that also binds derivative alpha-methyl-D-mannppyranoside. Has hemagglutinating activity towards rabbit erythrocytes. This chain is Lectin CPL, found in Bionia pedicellata (Camptosema pedicellatum).